The sequence spans 144 residues: Dynein light chain Tctex-type protein 2B (144 aa).

Belongs to the dynein light chain Tctex-type family. As to quaternary structure, light chain of the cytoplasmic dynein complex 2, a multisubunit complex composed at least of eleven different proteins. The cytoplasmic dynein 2 complex consists of two catalytic heavy chains (HCs) and a number of non-catalytic subunits presented by intermediate chains (ICs), light intermediate chains (LICs) and light chains (LCs). Among them, a heavy chain (DYNC2H1), two intermediate chains (DYNC2I2 and DYNC2I1), a light intermediate chain (DYNC2LI1), and a light chain (DYNLT2B) are unique to the dynein-2 complex, but a subset of the light chains are also shared by dynein-1 and dynein-2 complexes. The dimer DYNLT2B-DYNLT1/DYNLT3 interacts with DYNC2I1; this interaction is crucial for retrograde trafficking of ciliary proteins.

Its subcellular location is the dynein axonemal particle. Acts as one of several non-catalytic accessory components of the cytoplasmic dynein 2 complex (dynein-2 complex), a motor protein complex that drives the movement of cargos along microtubules within cilia and flagella in concert with the intraflagellar transport (IFT) system. Required for proper retrograde ciliary transport. The polypeptide is Dynein light chain Tctex-type protein 2B (Dynlt2b) (Mus musculus (Mouse)).